The primary structure comprises 326 residues: tRNA-modifying protein YgfZ (326 aa).

The folate site is built by Trp-27 and Trp-189.

The protein belongs to the tRNA-modifying YgfZ family.

It localises to the cytoplasm. Folate-binding protein involved in regulating the level of ATP-DnaA and in the modification of some tRNAs. It is probably a key factor in regulatory networks that act via tRNA modification, such as initiation of chromosomal replication. This is tRNA-modifying protein YgfZ from Escherichia coli O7:K1 (strain IAI39 / ExPEC).